Reading from the N-terminus, the 258-residue chain is Hydroxyacylglutathione hydrolase (258 aa).

Positions 56, 58, 60, 61, 112, 132, and 170 each coordinate Zn(2+).

It belongs to the metallo-beta-lactamase superfamily. Glyoxalase II family. In terms of assembly, monomer. It depends on Zn(2+) as a cofactor.

The enzyme catalyses an S-(2-hydroxyacyl)glutathione + H2O = a 2-hydroxy carboxylate + glutathione + H(+). It participates in secondary metabolite metabolism; methylglyoxal degradation; (R)-lactate from methylglyoxal: step 2/2. Thiolesterase that catalyzes the hydrolysis of S-D-lactoyl-glutathione to form glutathione and D-lactic acid. This is Hydroxyacylglutathione hydrolase from Pseudomonas aeruginosa (strain LESB58).